A 239-amino-acid chain; its full sequence is Pyridoxine 5'-phosphate synthase (239 aa).

N7 contacts 3-amino-2-oxopropyl phosphate. 1-deoxy-D-xylulose 5-phosphate is bound at residue 9–10; the sequence is DH. R18 serves as a coordination point for 3-amino-2-oxopropyl phosphate. H43 serves as the catalytic Proton acceptor. R45 and H50 together coordinate 1-deoxy-D-xylulose 5-phosphate. E70 (proton acceptor) is an active-site residue. T100 is a 1-deoxy-D-xylulose 5-phosphate binding site. H191 (proton donor) is an active-site residue. Residues G192 and 213 to 214 contribute to the 3-amino-2-oxopropyl phosphate site; that span reads GH.

The protein belongs to the PNP synthase family. As to quaternary structure, homooctamer; tetramer of dimers.

It localises to the cytoplasm. The catalysed reaction is 3-amino-2-oxopropyl phosphate + 1-deoxy-D-xylulose 5-phosphate = pyridoxine 5'-phosphate + phosphate + 2 H2O + H(+). The protein operates within cofactor biosynthesis; pyridoxine 5'-phosphate biosynthesis; pyridoxine 5'-phosphate from D-erythrose 4-phosphate: step 5/5. In terms of biological role, catalyzes the complicated ring closure reaction between the two acyclic compounds 1-deoxy-D-xylulose-5-phosphate (DXP) and 3-amino-2-oxopropyl phosphate (1-amino-acetone-3-phosphate or AAP) to form pyridoxine 5'-phosphate (PNP) and inorganic phosphate. In Gloeobacter violaceus (strain ATCC 29082 / PCC 7421), this protein is Pyridoxine 5'-phosphate synthase.